A 407-amino-acid polypeptide reads, in one-letter code: Cell division control protein 12 (407 aa).

At serine 2 the chain carries N-acetylserine. The region spanning 31-314 (EGGTFTVMLC…ETYRRLRLEG (284 aa)) is the Septin-type G domain. The tract at residues 41–48 (GESGLGKT) is G1 motif. Residues 41–48 (GESGLGKT), threonine 75, glycine 101, 180–188 (KADTLTAQE), glycine 247, and arginine 263 contribute to the GTP site. The tract at residues 98 to 101 (DTPG) is G3 motif. A G4 motif region spans residues 179–182 (AKAD). A coiled-coil region spans residues 344 to 406 (EEENALKKYF…KSLQVKKSHL (63 aa)).

Belongs to the TRAFAC class TrmE-Era-EngA-EngB-Septin-like GTPase superfamily. Septin GTPase family. As to quaternary structure, component of the septin complex which consists of CDC3, CDC10, CDC11, CDC12 and probably SHS1 and rearranges to a cortical collar of highly ordered filaments at the mother-bud-neck. A complex formed by CDC3, CDC10, CDC11 and CDC12 is capable of forming long filaments in vitro and the components seem to be present in a 2:2:2:2 arrangement in vivo. The filaments are proposed to be formed by the end-to-end polymerization of CDC3-CDC12-CDC11 complexes with CDC10 serving as a bridge to bundle the polymers into paired filaments. Component of the GIN4 complex composed of at least BNI5, CDC3, CDC10, CDC11, CDC12, GIN4, NAP1 and SHS1. Self-associates. Interacts with SYP1.

The protein localises to the membrane. It is found in the bud neck. Its function is as follows. Septins are GTPases involved in cytokinesis that assemble early in the cell cycle as a patch at the incipient bud site and form a ring approximate 15 minutes before bud emergence, which transforms into an hour-glass shaped collar of cortical filaments that spans both sides of the mother-bud neck. This collar persists until just before cytokinesis, when it splits into two rings that occupy opposite sides of the neck. The septins at the bud neck serve as a structural scaffold that recruits different components involved in diverse processes at specific stages during the cell cycle. Many proteins bind asymmetrically to the septin collar. The septin assembly is regulated by protein kinases GIN4 and/or CLA4. May act by recruiting MYO1 and HOF1, a protein involved in septation, to the site of cleavage. Septins are also involved in cell morphogenesis, bud site selection, chitin deposition, cell cycle regulation, cell compartmentalization and spore wall formation. This is Cell division control protein 12 (CDC12) from Saccharomyces cerevisiae (strain ATCC 204508 / S288c) (Baker's yeast).